We begin with the raw amino-acid sequence, 293 residues long: Fructose-bisphosphate aldolase (293 aa).

S50 is a binding site for D-glyceraldehyde 3-phosphate. Catalysis depends on D85, which acts as the Proton donor. Zn(2+) is bound by residues H86, D106, E136, and H178. G179 contributes to the dihydroxyacetone phosphate binding site. H208 is a Zn(2+) binding site. Dihydroxyacetone phosphate contacts are provided by residues 209 to 211 (GGS) and 230 to 233 (NVNT).

Belongs to the class II fructose-bisphosphate aldolase family. Requires Zn(2+) as cofactor.

It catalyses the reaction beta-D-fructose 1,6-bisphosphate = D-glyceraldehyde 3-phosphate + dihydroxyacetone phosphate. It participates in carbohydrate degradation; glycolysis; D-glyceraldehyde 3-phosphate and glycerone phosphate from D-glucose: step 4/4. Its function is as follows. Catalyzes the aldol condensation of dihydroxyacetone phosphate (DHAP or glycerone-phosphate) with glyceraldehyde 3-phosphate (G3P) to form fructose 1,6-bisphosphate (FBP) in gluconeogenesis and the reverse reaction in glycolysis. This Streptococcus pyogenes serotype M1 protein is Fructose-bisphosphate aldolase (fba).